The primary structure comprises 21 residues: Fibrinogen beta chain (21 aa).

Residue glutamine 1 is modified to Pyrrolidone carboxylic acid. Acidic residues predominate over residues 1–11 (QHSTDYDEVED). Residues 1 to 21 (QHSTDYDEVEDDRAKLHLDAR) are disordered. An O-linked (GalNAc...) threonine glycan is attached at threonine 4. Tyrosine 6 is subject to Sulfotyrosine. Positions 12 to 21 (DRAKLHLDAR) are enriched in basic and acidic residues.

In terms of assembly, heterohexamer; disulfide linked. Contains 2 sets of 3 non-identical chains (alpha, beta and gamma). The 2 heterotrimers are in head to head conformation with the N-termini in a small central domain. Conversion of fibrinogen to fibrin is triggered by thrombin, which cleaves fibrinopeptides A and B from alpha and beta chains, and thus exposes the N-terminal polymerization sites responsible for the formation of the soft clot.

Its subcellular location is the secreted. Its function is as follows. Cleaved by the protease thrombin to yield monomers which, together with fibrinogen alpha (FGA) and fibrinogen gamma (FGG), polymerize to form an insoluble fibrin matrix. Fibrin has a major function in hemostasis as one of the primary components of blood clots. In addition, functions during the early stages of wound repair to stabilize the lesion and guide cell migration during re-epithelialization. Was originally thought to be essential for platelet aggregation, based on in vitro studies using anticoagulated blood. However subsequent studies have shown that it is not absolutely required for thrombus formation in vivo. Enhances expression of SELP in activated platelets. Maternal fibrinogen is essential for successful pregnancy. Fibrin deposition is also associated with infection, where it protects against IFNG-mediated hemorrhage. May also facilitate the antibacterial immune response via both innate and T-cell mediated pathways. This chain is Fibrinogen beta chain (FGB), found in Muntiacus muntjak (Barking deer).